We begin with the raw amino-acid sequence, 198 residues long: MSTAVQVDDVMRYRDSRFQTIAAKLLPTQYLVVDDDTALTTTLGSCVAACLRDPVLKIGGMNHFLLPKGQVGDGAPTRYGSYAMELLINDMLKRGAHRKRIEAKVFGGANVLKGFTSNPVGTRNAEFVRQYLQAEHIPIIAEDLCGIHPRKVWFFATTGRVVVQRLPHAHEAEVAATESAVRARLSKAPVTGGVELFE.

The protein belongs to the CheD family.

The enzyme catalyses L-glutaminyl-[protein] + H2O = L-glutamyl-[protein] + NH4(+). Probably deamidates glutamine residues to glutamate on methyl-accepting chemotaxis receptors (MCPs), playing an important role in chemotaxis. The polypeptide is Probable chemoreceptor glutamine deamidase CheD (Xanthomonas euvesicatoria pv. vesicatoria (strain 85-10) (Xanthomonas campestris pv. vesicatoria)).